A 380-amino-acid chain; its full sequence is Phospho-N-acetylmuramoyl-pentapeptide-transferase (380 aa).

A run of 11 helical transmembrane segments spans residues 26-46, 75-95, 98-118, 135-155, 161-181, 183-203, 222-242, 259-279, 283-303, 311-331, and 357-377; these read IVAAGLTAMVLGLLLGPIFIE, MGGALILASVAIATLLFADLA, FVWAALLVTLGYGAIGFTDDW, LVLQVLVVVVVYYACLTDWRF, FPWVFVGSYVDLHVTLPFVPS, LFNPDLGFLYLPFMVFVVIAT, VVSAMTFLALSYVAGATIAGF, LGVFCSAIFGAGVAFLWYNTY, VFMGDVGSLALGGGLGMMAVL, AILHGVFLTETVSVILQVWSF, and KIIVRFWIISVMLALVALLSI.

The protein belongs to the glycosyltransferase 4 family. MraY subfamily. Requires Mg(2+) as cofactor.

It localises to the cell inner membrane. It catalyses the reaction UDP-N-acetyl-alpha-D-muramoyl-L-alanyl-gamma-D-glutamyl-meso-2,6-diaminopimeloyl-D-alanyl-D-alanine + di-trans,octa-cis-undecaprenyl phosphate = di-trans,octa-cis-undecaprenyl diphospho-N-acetyl-alpha-D-muramoyl-L-alanyl-D-glutamyl-meso-2,6-diaminopimeloyl-D-alanyl-D-alanine + UMP. The protein operates within cell wall biogenesis; peptidoglycan biosynthesis. Its function is as follows. Catalyzes the initial step of the lipid cycle reactions in the biosynthesis of the cell wall peptidoglycan: transfers peptidoglycan precursor phospho-MurNAc-pentapeptide from UDP-MurNAc-pentapeptide onto the lipid carrier undecaprenyl phosphate, yielding undecaprenyl-pyrophosphoryl-MurNAc-pentapeptide, known as lipid I. The protein is Phospho-N-acetylmuramoyl-pentapeptide-transferase of Anaeromyxobacter dehalogenans (strain 2CP-1 / ATCC BAA-258).